A 117-amino-acid chain; its full sequence is UPF0342 protein LBUL_1430 (117 aa).

The protein belongs to the UPF0342 family.

The polypeptide is UPF0342 protein LBUL_1430 (Lactobacillus delbrueckii subsp. bulgaricus (strain ATCC BAA-365 / Lb-18)).